A 319-amino-acid chain; its full sequence is Acetyl-coenzyme A carboxylase carboxyl transferase subunit alpha (319 aa).

One can recognise a CoA carboxyltransferase C-terminal domain in the interval 35-296 (NIDEEVQRLR…KTQLLADLED (262 aa)).

This sequence belongs to the AccA family. Acetyl-CoA carboxylase is a heterohexamer composed of biotin carboxyl carrier protein (AccB), biotin carboxylase (AccC) and two subunits each of ACCase subunit alpha (AccA) and ACCase subunit beta (AccD).

The protein localises to the cytoplasm. The enzyme catalyses N(6)-carboxybiotinyl-L-lysyl-[protein] + acetyl-CoA = N(6)-biotinyl-L-lysyl-[protein] + malonyl-CoA. It participates in lipid metabolism; malonyl-CoA biosynthesis; malonyl-CoA from acetyl-CoA: step 1/1. Component of the acetyl coenzyme A carboxylase (ACC) complex. First, biotin carboxylase catalyzes the carboxylation of biotin on its carrier protein (BCCP) and then the CO(2) group is transferred by the carboxyltransferase to acetyl-CoA to form malonyl-CoA. The protein is Acetyl-coenzyme A carboxylase carboxyl transferase subunit alpha of Edwardsiella ictaluri (strain 93-146).